The chain runs to 331 residues: Flotillin-like protein FloA (331 aa).

The next 2 membrane-spanning stretches (helical) occupy residues 6–26 (LMIL…FTFV) and 28–48 (VMLW…TLVG). A required for correct localization region spans residues 236-331 (QTDQAEADKN…KDPSDEDRKS (96 aa)). 4 short sequence motifs (EA repeat) span residues 240-242 (AEA), 251-253 (AEE), 278-282 (EAEAE), and 288-290 (AEA). Positions 312–331 (EMRDSFGKLTKDPSDEDRKS) are disordered.

This sequence belongs to the flotillin-like FloA family. As to quaternary structure, homooligomerizes. Interacts with FloT. Interacts with FtsH midcell. Interacts with PhoR, colocalizes with PhoR in FloA-only membrane rafts.

It localises to the cell membrane. The protein localises to the membrane raft. Its function is as follows. Found in functional membrane microdomains (FMM) that may be equivalent to eukaryotic membrane rafts. FMMs are highly dynamic and increase in number as cells age. FloA and FloT function is partially redundant; double deletions have marked synthetic phenotypes. Flotillins are thought to be important factors in membrane fluidity, especially during periods of rapid growth in rich media. Whether specific proteins are associated with FMMs is controversial; in one study FloT rafts have been shown to include proteins involved in adaptation to stationary phase, while FloA-FloT rafts include proteins involved in differentiation including sporulation, biofilm formation and DNA uptake competence. Another (more finely resolved) study only showed association of NfeD2 with FloT rafts of all the proteins examined. Involved in spatial organization of membranes, perhaps recruiting proteins to specific membrane regions. Simultaneous overexpression of both FloA and FloT leads to defects in cell division and differentiation, in part caused by stabilization of FtsH and its subsequent increased ability to degrade proteins. Cells make more biofilm, are about half as long, have less EzrA and more frequent Z-rings. The protein is Flotillin-like protein FloA of Bacillus subtilis (strain 168).